The sequence spans 170 residues: Class I hydrophobin E (170 aa).

The N-terminal stretch at 1–19 (MQLTTLLTGLISVLSVTTA) is a signal peptide. Disulfide bonds link C62–C126, C70–C117, C71–C105, and C127–C139.

This sequence belongs to the fungal hydrophobin family.

The protein localises to the secreted. It localises to the cell wall. In terms of biological role, aerial growth, conidiation, and dispersal of filamentous fungi in the environment rely upon a capability of their secreting small amphipathic proteins called hydrophobins (HPBs) with low sequence identity. Class I can self-assemble into an outermost layer of rodlet bundles on aerial cell surfaces, conferring cellular hydrophobicity that supports fungal growth, development and dispersal; whereas Class II form highly ordered films at water-air interfaces through intermolecular interactions but contribute nothing to the rodlet structure. In P.expansum, hydrophobins contribute to germination, tolerance to cold stress and mycotoxins patulin and citrinin production. This is Class I hydrophobin E from Penicillium expansum (Blue mold rot fungus).